The following is a 490-amino-acid chain: Cytochrome P450 2C25 (490 aa).

Cys-435 serves as a coordination point for heme.

The protein belongs to the cytochrome P450 family. Heme is required as a cofactor.

It localises to the endoplasmic reticulum membrane. Its subcellular location is the microsome membrane. It carries out the reaction an organic molecule + reduced [NADPH--hemoprotein reductase] + O2 = an alcohol + oxidized [NADPH--hemoprotein reductase] + H2O + H(+). In terms of biological role, catalyzes the hydroxylation of tolbutamide and the N-demethylation of aminopyrine and benzphetamine. Also has testosterone hydroxylase (16 beta) activity. This Mesocricetus auratus (Golden hamster) protein is Cytochrome P450 2C25 (CYP2C25).